The primary structure comprises 252 residues: Chitooligosaccharide deacetylase (252 aa).

Residues H61 and H125 each contribute to the Mg(2+) site.

This sequence belongs to the YdjC deacetylase family. ChbG subfamily. In terms of assembly, homodimer. It depends on Mg(2+) as a cofactor.

It is found in the cytoplasm. The catalysed reaction is N,N'-diacetylchitobiose + H2O = N-acetyl-beta-D-glucosaminyl-(1-&gt;4)-D-glucosamine + acetate. The enzyme catalyses diacetylchitobiose-6'-phosphate + H2O = N'-monoacetylchitobiose-6'-phosphate + acetate. It participates in glycan degradation; chitin degradation. Its function is as follows. Involved in the degradation of chitin. ChbG is essential for growth on the acetylated chitooligosaccharides chitobiose and chitotriose but is dispensable for growth on cellobiose and chitosan dimer, the deacetylated form of chitobiose. Deacetylation of chitobiose-6-P and chitotriose-6-P is necessary for both the activation of the chb promoter by the regulatory protein ChbR and the hydrolysis of phosphorylated beta-glucosides by the phospho-beta-glucosidase ChbF. Catalyzes the removal of only one acetyl group from chitobiose-6-P to yield monoacetylchitobiose-6-P, the inducer of ChbR and the substrate of ChbF. The chain is Chitooligosaccharide deacetylase from Escherichia coli O139:H28 (strain E24377A / ETEC).